The sequence spans 208 residues: Phosphoheptose isomerase (208 aa).

The SIS domain occupies 38-200 (MAVTLAKGHK…LFENVLALQP (163 aa)). 53–55 (NGG) serves as a coordination point for substrate. 2 residues coordinate Zn(2+): His62 and Glu66. Substrate-binding positions include Glu66, 95 to 96 (ND), 121 to 123 (STS), Ser126, and Gln173. The Zn(2+) site is built by Gln173 and His181.

It belongs to the SIS family. GmhA subfamily. Homotetramer. The cofactor is Zn(2+).

Its subcellular location is the cytoplasm. The catalysed reaction is 2 D-sedoheptulose 7-phosphate = D-glycero-alpha-D-manno-heptose 7-phosphate + D-glycero-beta-D-manno-heptose 7-phosphate. It participates in carbohydrate biosynthesis; D-glycero-D-manno-heptose 7-phosphate biosynthesis; D-glycero-alpha-D-manno-heptose 7-phosphate and D-glycero-beta-D-manno-heptose 7-phosphate from sedoheptulose 7-phosphate: step 1/1. Functionally, catalyzes the isomerization of sedoheptulose 7-phosphate in D-glycero-D-manno-heptose 7-phosphate. The chain is Phosphoheptose isomerase from Nitratidesulfovibrio vulgaris (strain ATCC 29579 / DSM 644 / CCUG 34227 / NCIMB 8303 / VKM B-1760 / Hildenborough) (Desulfovibrio vulgaris).